The chain runs to 290 residues: MTRPDNEPARLRSVAENLAAEAAAFVRGRRAEVFGISRAGDGDGAVRAKSSPTDPVTVVDTDTERLLRDRLAQLRPGDPILGEEGGGPADVTATPSDRVTWVLDPIDGTVNFVYGIPAYAVSIGAQVGGITVAGAVADVAARTVYSAATGLGAHLTDERGRHVLRCTGVDELSMALLGTGFGYSVRCREKQAELLAHVVPLVRDVRRIGSAALDLCMVAAGRLDAYYEHGVQVWDCAAGALIAAEAGARVLLSTPRAGGAGLVVVAAAPGIADELLAALQRFNGLEPIPD.

4 residues coordinate Mg(2+): Glu83, Asp104, Ile106, and Asp107. Position 83 (Glu83) interacts with substrate. Residues 106 to 109, Arg206, and Asp235 each bind substrate; that span reads IDGT. Asp235 lines the Mg(2+) pocket.

Belongs to the inositol monophosphatase superfamily. Mg(2+) is required as a cofactor.

The enzyme catalyses a myo-inositol phosphate + H2O = myo-inositol + phosphate. This Mycobacterium bovis (strain ATCC BAA-935 / AF2122/97) protein is Inositol-1-monophosphatase (suhB).